Consider the following 471-residue polypeptide: Tigger transposable element-derived protein 3 (471 aa).

An HTH psq-type domain is found at 3 to 55; the sequence is LSSKKKLHALSLAEKIQVLELLDESKMSQSEVARRFQVSQPQISRICKNKEKL. 2 DNA-binding regions (H-T-H motif) span residues 31-51 and 100-130; these read QSEV…ICKN and PMLL…WKRR. Residues 67–137 form the HTH CENPB-type domain; it reads ERKRKRESKY…KRRNNVGFGA (71 aa). A DDE-1 domain is found at 167 to 360; sequence FSPEDVFGCA…VPPQLIFSSF (194 aa).

This sequence belongs to the tigger transposable element derived protein family.

It is found in the nucleus. The sequence is that of Tigger transposable element-derived protein 3 (TIGD3) from Homo sapiens (Human).